The primary structure comprises 393 residues: MDLLAPLSAVVLTYREVSAEALGKVGQEMKRCIERRARAFPMYVLHTCSRVEAYLYGAPPEEVQEVAEAYRRYVDSVRVITGAEAARHLFRVAAGLDSILIGETDVLGQVEEAFDRQVRAGYTRGLLKTVVERAVRVGKRVRTETAISRGPRGLGSLSIIYVSRLLDLRQAKAAVLGAGAVGSGLAMELASRGVGKLYILNRTFEKAREVAAKTGGEARPLTREEVERCLRECDVVFSSVHSMEYVIDRVPEGASVKIVVDLGVPQTVAPGLPVKVVRIEDLRQVAEQYNAERAAEVAKAEAIVEEELAALPRLLARRYVEETVAALLETAMTAAEEEGARAGCDAAALAAKTTVKRVLLPLVEKMKKMAEDGQMEEAVRLANVLTQAVGRKT.

Substrate is bound by residues 47 to 50 (TCSR), Ser-98, 103 to 105 (ETD), and Gln-109. The Nucleophile role is filled by Cys-48. 177–182 (GAGAVG) is a binding site for NADP(+).

The protein belongs to the glutamyl-tRNA reductase family. As to quaternary structure, homodimer.

It carries out the reaction (S)-4-amino-5-oxopentanoate + tRNA(Glu) + NADP(+) = L-glutamyl-tRNA(Glu) + NADPH + H(+). It functions in the pathway porphyrin-containing compound metabolism; protoporphyrin-IX biosynthesis; 5-aminolevulinate from L-glutamyl-tRNA(Glu): step 1/2. Functionally, catalyzes the NADPH-dependent reduction of glutamyl-tRNA(Glu) to glutamate 1-semialdehyde (GSA). The polypeptide is Glutamyl-tRNA reductase (Pyrobaculum neutrophilum (strain DSM 2338 / JCM 9278 / NBRC 100436 / V24Sta) (Thermoproteus neutrophilus)).